Consider the following 68-residue polypeptide: Large ribosomal subunit protein uL29 (68 aa).

Belongs to the universal ribosomal protein uL29 family.

The chain is Large ribosomal subunit protein uL29 from Geobacillus sp. (strain WCH70).